The primary structure comprises 534 residues: Cytochrome c oxidase subunit 1 (534 aa).

The helical transmembrane segment at 16–36 (VLYFIFSVFCGMAGTGMSMII) threads the bilayer. Ca(2+)-binding residues include E39 and G44. H62 contributes to the Fe(II)-heme a binding site. The next 6 membrane-spanning stretches (helical) occupy residues 64 to 84 (ILMVFFLVMPALIGGFGNYLL), 101 to 121 (ISFWLLPPALVCLVTSTLVES), 147 to 167 (AIFALHMTSISSLLGAINFIV), 183 to 203 (PLFVWAIFITAFLLLLSLPVL), 235 to 255 (LFWFFGHPEVYIMIVPAFGVI), and 267 to 287 (VFGEISMVYAMASIGLLGFLV). Cu cation is bound at residue H241. The 1'-histidyl-3'-tyrosine (His-Tyr) cross-link spans 241-245 (HPEVY). Y245 contacts O2. Residues H290 and H291 each coordinate Cu cation. A run of 2 helical transmembrane segments spans residues 310–330 (MIIAIPTGIKIFSWLATIYGG) and 338–358 (MMYAIAFLFLFTLGGFTGVAL). The Mg(2+) site is built by H368 and D369. Transmembrane regions (helical) follow at residues 372–392 (YVVAHFHYVLSMGAVFSMFAG) and 414–434 (FWLIFVGVNVIFLPMHFLGIN). H376 is a heme a3 binding site. H378 contacts Fe(II)-heme a. P441 contacts Ca(2+). A helical transmembrane segment spans residues 453-473 (VSSIGSFIAMISLILFIYILF).

The protein belongs to the heme-copper respiratory oxidase family. Component of the cytochrome c oxidase (complex IV, CIV), a multisubunit enzyme composed of a catalytic core of 3 subunits and several supernumerary subunits. The complex exists as a monomer or a dimer and forms supercomplexes (SCs) in the inner mitochondrial membrane with ubiquinol-cytochrome c oxidoreductase (cytochrome b-c1 complex, complex III, CIII). It depends on heme as a cofactor. The cofactor is Cu cation.

The protein resides in the mitochondrion inner membrane. It carries out the reaction 4 Fe(II)-[cytochrome c] + O2 + 8 H(+)(in) = 4 Fe(III)-[cytochrome c] + 2 H2O + 4 H(+)(out). The protein operates within energy metabolism; oxidative phosphorylation. Its function is as follows. Component of the cytochrome c oxidase, the last enzyme in the mitochondrial electron transport chain which drives oxidative phosphorylation. The respiratory chain contains 3 multisubunit complexes succinate dehydrogenase (complex II, CII), ubiquinol-cytochrome c oxidoreductase (cytochrome b-c1 complex, complex III, CIII) and cytochrome c oxidase (complex IV, CIV), that cooperate to transfer electrons derived from NADH and succinate to molecular oxygen, creating an electrochemical gradient over the inner membrane that drives transmembrane transport and the ATP synthase. Cytochrome c oxidase is the component of the respiratory chain that catalyzes the reduction of oxygen to water. Electrons originating from reduced cytochrome c in the intermembrane space (IMS) are transferred via the dinuclear copper A center (CU(A)) of subunit 2 and heme A of subunit 1 to the active site in subunit 1, a binuclear center (BNC) formed by heme A3 and copper B (CU(B)). The BNC reduces molecular oxygen to 2 water molecules using 4 electrons from cytochrome c in the IMS and 4 protons from the mitochondrial matrix. This Vanderwaltozyma polyspora (strain ATCC 22028 / DSM 70294 / BCRC 21397 / CBS 2163 / NBRC 10782 / NRRL Y-8283 / UCD 57-17) (Kluyveromyces polysporus) protein is Cytochrome c oxidase subunit 1 (COX1).